Reading from the N-terminus, the 358-residue chain is Vascular endothelial growth factor D (358 aa).

The N-terminal stretch at 1-21 is a signal peptide; sequence MYGEWGMGNILMMFHVYLVQG. A propeptide spanning residues 22 to 93 is cleaved from the precursor; sequence FRSEHGPVKD…SRSASHRSTR (72 aa). 3 disulfides stabilise this stretch: cysteine 116–cysteine 158, cysteine 147–cysteine 194, and cysteine 151–cysteine 196. Asparagine 160 and asparagine 190 each carry an N-linked (GlcNAc...) asparagine glycan. A propeptide spanning residues 211–358 is cleaved from the precursor; the sequence is SIQTPEEDEC…AQGLYSQENP (148 aa). The 1; approximate repeat unit spans residues 227-242; the sequence is CPIDMLWDNTKCKCVL. The segment at 227-323 is 4 X 16 AA repeats of C-X(10)-C-X-C-X(1,3)-C; it reads CPIDMLWDNT…PDTCSCEDRC (97 aa). A run of 3 repeats spans residues 263–278, 282–298, and 306–323. Asparagine 292 is a glycosylation site (N-linked (GlcNAc...) asparagine).

Belongs to the PDGF/VEGF growth factor family. As to quaternary structure, homodimer; non-covalent and antiparallel. Undergoes a complex proteolytic maturation which generates a variety of processed secreted forms with increased activity toward VEGFR-3 and VEGFR-2. VEGF-D first form an antiparallel homodimer linked by disulfide bonds before secretion. The fully processed VEGF-D is composed mostly of two VEGF homology domains (VHDs) bound by non-covalent interactions. Highly expressed in fetal and adult lung.

It localises to the secreted. Functionally, growth factor active in angiogenesis, lymphangiogenesis and endothelial cell growth, stimulating their proliferation and migration and also has effects on the permeability of blood vessels. May function in the formation of the venous and lymphatic vascular systems during embryogenesis, and also in the maintenance of differentiated lymphatic endothelium in adults. Binds and activates VEGFR-3 (Flt4) receptor. The polypeptide is Vascular endothelial growth factor D (Mus musculus (Mouse)).